We begin with the raw amino-acid sequence, 231 residues long: Very-long-chain (3R)-3-hydroxyacyl-CoA dehydratase 4 (231 aa).

Over 1-19 the chain is Cytoplasmic; that stretch reads MGPVALPTWLQPRYRKNAY. Residues 20–40 form a helical membrane-spanning segment; the sequence is LFIYYLIQFCGHSWIFTNMTV. Residues 41–56 lie on the Lumenal side of the membrane; it reads RFFSFGKDSMVDTFYA. Residues 57–77 form a helical membrane-spanning segment; that stretch reads IGLVMQLCQSISLLELLHIYV. Residues 78–112 lie on the Cytoplasmic side of the membrane; the sequence is GIESNHLLPRILQLTERIIVLFMVITSQEEVQEKY. Residues 113-133 form a helical membrane-spanning segment; that stretch reads VVCVLFIFRNLLDMVRYTYSM. At 134-135 the chain is on the lumenal side; sequence LS. A helical membrane pass occupies residues 136-156; that stretch reads VIGISYAVLTWFSQTLWMPIY. Residue Tyr156 is part of the active site. Position 157 (Pro157) is a topological domain, cytoplasmic. A helical membrane pass occupies residues 158-178; sequence LCVLAEAFTIYQSLPYFESFG. The active site involves Glu163. The Lumenal segment spans residues 179–189; it reads TYSTKLPFDLS. Residues 190–210 form a helical membrane-spanning segment; the sequence is FYFPYVLKIYLMMLFVGMYFT. Topologically, residues 211–231 are cytoplasmic; it reads YNHLYSERRDILRVFPNKKKM.

Belongs to the very long-chain fatty acids dehydratase HACD family. May interact with enzymes of the ELO family (including ELOVL1); with those enzymes that mediate condensation, the first of the four steps of the reaction cycle responsible for fatty acids elongation, may be part of a larger fatty acids elongase complex.

The protein localises to the endoplasmic reticulum membrane. It carries out the reaction a very-long-chain (3R)-3-hydroxyacyl-CoA = a very-long-chain (2E)-enoyl-CoA + H2O. It catalyses the reaction (3R)-hydroxyhexadecanoyl-CoA = (2E)-hexadecenoyl-CoA + H2O. It participates in lipid metabolism; fatty acid biosynthesis. In terms of biological role, catalyzes the third of the four reactions of the long-chain fatty acids elongation cycle. This endoplasmic reticulum-bound enzymatic process, allows the addition of two carbons to the chain of long- and very long-chain fatty acids/VLCFAs per cycle. This enzyme catalyzes the dehydration of the 3-hydroxyacyl-CoA intermediate into trans-2,3-enoyl-CoA, within each cycle of fatty acid elongation. Thereby, it participates in the production of VLCFAs of different chain lengths that are involved in multiple biological processes as precursors of membrane lipids and lipid mediators. The sequence is that of Very-long-chain (3R)-3-hydroxyacyl-CoA dehydratase 4 from Bos taurus (Bovine).